Here is a 573-residue protein sequence, read N- to C-terminus: Arylsulfatase I (573 aa).

The first 23 residues, 1 to 23 (MHALSGFSLVSLLSLGYLSWDWA), serve as a signal peptide directing secretion. Residues Asp55, Asp56, and Cys93 each coordinate Ca(2+). Catalysis depends on Cys93, which acts as the Nucleophile. Cys93 carries the post-translational modification 3-oxoalanine (Cys). Lys147 contacts substrate. Residue His149 is part of the active site. Position 239 (His239) interacts with substrate. Asn276 and Asn288 each carry an N-linked (GlcNAc...) asparagine glycan. Residues Asp297 and Asn298 each coordinate Ca(2+). Residue Lys315 participates in substrate binding. 2 N-linked (GlcNAc...) asparagine glycosylation sites follow: Asn466 and Asn496. A disordered region spans residues 506 to 550 (AANPRAHPDFNGGAWGPWASDEDEEEEDEEEEGRARSFPRGRRKK). Acidic residues predominate over residues 525 to 537 (SDEDEEEEDEEEE).

Belongs to the sulfatase family. It depends on Ca(2+) as a cofactor. Post-translationally, the oxidation of Cys-93 residue to 3-oxoalanine (also known as C(alpha)-formylglycine) by SUMF1/Sulfatase-modifying factor 1, seems critical for catalytic activity.

It is found in the secreted. The protein localises to the endoplasmic reticulum. Displays arylsulfatase activity at neutral pH, when co-expressed with SUMF1; arylsulfatase activity is measured in the secretion medium of retinal cell line, but no activity is recorded when measured in cell extracts. The protein is Arylsulfatase I (Arsi) of Rattus norvegicus (Rat).